The sequence spans 1155 residues: MHC class II transactivator (1155 aa).

The segment at A171–I210 is required for acetyltransferase activity. Disordered regions lie at residues G217 to K237 and S297 to P357. Basic and acidic residues predominate over residues R224–S233. The NACHT domain occupies Q439 to Q749. G445–S452 contributes to the GTP binding site. LRR repeat units lie at residues S1010 to S1033, A1041 to E1062, S1070 to Q1091, and S1098 to S1119.

In terms of assembly, interacts with ZXDA and ZXDC. Interacts with PML (isoform PML-2). Interacts with TAF7; interaction inhibits CIITA acetyltransferase activity, thereby repressing transcription. In terms of processing, autophosphorylated, affecting interaction with TAF7. In terms of tissue distribution, expressed at very high levels in dendritic cells, at very low levels in spleen and thymus and is not detected in other tissues. Detected at high levels in spleen and tonsil as well as in a number of B-lymphocyte cell lines, and at very low levels in dendritic cells.

The protein resides in the nucleus. Its subcellular location is the PML body. The enzyme catalyses L-seryl-[protein] + ATP = O-phospho-L-seryl-[protein] + ADP + H(+). It catalyses the reaction L-threonyl-[protein] + ATP = O-phospho-L-threonyl-[protein] + ADP + H(+). Functionally, essential for transcriptional activity of the HLA class II promoter; activation is via the proximal promoter. Does not bind DNA. May act in a coactivator-like fashion through protein-protein interactions by contacting factors binding to the proximal MHC class II promoter, to elements of the transcription machinery, or both. Alternatively it may activate HLA class II transcription by modifying proteins that bind to the MHC class II promoter. Also mediates enhanced MHC class I transcription, the promoter element requirements for CIITA-mediated transcription are distinct from those of constitutive MHC class I transcription, and CIITA can functionally replace TAF1 at these genes. Activates CD74 transcription. Exhibits intrinsic GTP-stimulated acetyltransferase activity. Exhibits serine/threonine protein kinase activity: phosphorylates the TFIID component TAF7, the RAP74 subunit of the general transcription factor TFIIF, histone H2B at 'Ser-37' and other histones. The sequence is that of MHC class II transactivator from Mus musculus (Mouse).